Consider the following 537-residue polypeptide: Di/tripeptide-binding protein 1 (537 aa).

Residues 1–29 (MRRNAVIRSAIMPSLLGAALVAAVPQAFA) form the signal peptide.

Belongs to the bacterial solute-binding protein 5 family. The complex is composed of two ATP-binding proteins (DppD and DppF), two transmembrane proteins (DppB and DppC) and a solute-binding protein (DppA1). Five orthologous SBPs (DppA1-A5) are present in P.aeruginosa, which increases the substrate specificity of the DppBCDF transporter.

Functionally, part of the ABC transporter DppABCDF involved in the uptake of various di/tripeptides. Prefers dipeptides with acidic residues at the C-terminal end. Involved in the uptake of phaseolotoxin, a toxic tripeptide inhibiting the enzyme ornithine carbamoyltransferase. The sequence is that of Di/tripeptide-binding protein 1 from Pseudomonas aeruginosa (strain UCBPP-PA14).